Consider the following 354-residue polypeptide: Protein NDH-DEPENDENT CYCLIC ELECTRON FLOW 5 (354 aa).

The N-terminal 49 residues, M1 to S49, are a transit peptide targeting the chloroplast.

The protein localises to the plastid. It is found in the chloroplast thylakoid membrane. Functionally, required for both formation and activity of the chloroplast NAD(P)H dehydrogenase (NDH) complex of the photosynthetic electron transport chain. May function in assembly or stabilization of the NDH complex. The sequence is that of Protein NDH-DEPENDENT CYCLIC ELECTRON FLOW 5 from Arabidopsis thaliana (Mouse-ear cress).